The sequence spans 178 residues: ATP synthase subunit delta (178 aa).

This sequence belongs to the ATPase delta chain family. In terms of assembly, F-type ATPases have 2 components, F(1) - the catalytic core - and F(0) - the membrane proton channel. F(1) has five subunits: alpha(3), beta(3), gamma(1), delta(1), epsilon(1). F(0) has three main subunits: a(1), b(2) and c(10-14). The alpha and beta chains form an alternating ring which encloses part of the gamma chain. F(1) is attached to F(0) by a central stalk formed by the gamma and epsilon chains, while a peripheral stalk is formed by the delta and b chains.

It localises to the cell inner membrane. Its function is as follows. F(1)F(0) ATP synthase produces ATP from ADP in the presence of a proton or sodium gradient. F-type ATPases consist of two structural domains, F(1) containing the extramembraneous catalytic core and F(0) containing the membrane proton channel, linked together by a central stalk and a peripheral stalk. During catalysis, ATP synthesis in the catalytic domain of F(1) is coupled via a rotary mechanism of the central stalk subunits to proton translocation. Functionally, this protein is part of the stalk that links CF(0) to CF(1). It either transmits conformational changes from CF(0) to CF(1) or is implicated in proton conduction. This chain is ATP synthase subunit delta, found in Hahella chejuensis (strain KCTC 2396).